Reading from the N-terminus, the 163-residue chain is uncharacterized protein (163 aa).

The interval D23–Q113 is disordered. The residue at position 102 (S102) is a Phosphoserine.

This is an uncharacterized protein from Mus musculus (Mouse).